The chain runs to 207 residues: ATP synthase subunit b 2 (207 aa).

The span at Met-1–Gly-31 shows a compositional bias: low complexity. The tract at residues Met-1–Ser-41 is disordered. Residues Ala-48–Ser-70 form a helical membrane-spanning segment.

It belongs to the ATPase B chain family. In terms of assembly, F-type ATPases have 2 components, F(1) - the catalytic core - and F(0) - the membrane proton channel. F(1) has five subunits: alpha(3), beta(3), gamma(1), delta(1), epsilon(1). F(0) has three main subunits: a(1), b(2) and c(10-14). The alpha and beta chains form an alternating ring which encloses part of the gamma chain. F(1) is attached to F(0) by a central stalk formed by the gamma and epsilon chains, while a peripheral stalk is formed by the delta and b chains.

The protein localises to the cell inner membrane. Its function is as follows. F(1)F(0) ATP synthase produces ATP from ADP in the presence of a proton or sodium gradient. F-type ATPases consist of two structural domains, F(1) containing the extramembraneous catalytic core and F(0) containing the membrane proton channel, linked together by a central stalk and a peripheral stalk. During catalysis, ATP synthesis in the catalytic domain of F(1) is coupled via a rotary mechanism of the central stalk subunits to proton translocation. Component of the F(0) channel, it forms part of the peripheral stalk, linking F(1) to F(0). The protein is ATP synthase subunit b 2 of Xanthobacter autotrophicus (strain ATCC BAA-1158 / Py2).